We begin with the raw amino-acid sequence, 235 residues long: Ribitol-5-phosphate cytidylyltransferase (235 aa).

CTP contacts are provided by residues 7–10 (LAGG), 82–88 (GADRNTS), and S113.

Belongs to the IspD/TarI cytidylyltransferase family. TarI subfamily.

It catalyses the reaction D-ribitol 5-phosphate + CTP + H(+) = CDP-L-ribitol + diphosphate. The protein operates within cell wall biogenesis; poly(ribitol phosphate) teichoic acid biosynthesis. In terms of biological role, catalyzes the transfer of the cytidylyl group of CTP to D-ribitol 5-phosphate. This Streptococcus pneumoniae serotype 19F (strain G54) protein is Ribitol-5-phosphate cytidylyltransferase.